We begin with the raw amino-acid sequence, 803 residues long: Phenylalanine--tRNA ligase beta subunit (803 aa).

Residues 39-150 (AKVLAPFTIA…ADAPVGAAYA (112 aa)) form the tRNA-binding domain. Positions 400-475 (ADDKIIDFPL…RIVGVDKVPL (76 aa)) constitute a B5 domain. Residues Asp453, Asp459, Glu462, and Glu463 each contribute to the Mg(2+) site. The 94-residue stretch at 709–802 (SAFHPVSRDF…VTKKTGGSLR (94 aa)) folds into the FDX-ACB domain.

Belongs to the phenylalanyl-tRNA synthetase beta subunit family. Type 1 subfamily. In terms of assembly, tetramer of two alpha and two beta subunits. It depends on Mg(2+) as a cofactor.

It is found in the cytoplasm. The enzyme catalyses tRNA(Phe) + L-phenylalanine + ATP = L-phenylalanyl-tRNA(Phe) + AMP + diphosphate + H(+). This is Phenylalanine--tRNA ligase beta subunit from Rhodopseudomonas palustris (strain ATCC BAA-98 / CGA009).